The chain runs to 491 residues: UDP-N-acetylmuramate--L-alanine ligase (491 aa).

126–132 (GTHGKTT) serves as a coordination point for ATP.

This sequence belongs to the MurCDEF family.

The protein localises to the cytoplasm. It carries out the reaction UDP-N-acetyl-alpha-D-muramate + L-alanine + ATP = UDP-N-acetyl-alpha-D-muramoyl-L-alanine + ADP + phosphate + H(+). It functions in the pathway cell wall biogenesis; peptidoglycan biosynthesis. Functionally, cell wall formation. This chain is UDP-N-acetylmuramate--L-alanine ligase, found in Shigella flexneri.